The primary structure comprises 217 residues: MSNVDINHARALVYQLLSSLFAREVNAQRLQELTSDAAQQFWTQLGHEPEFSAPVATMQKVLNDLQRNDALLELAADYCGLFLVGTRHSASPYASLYLNSEDEPLLFGQQHQQMSEFLHQSKLQVQSHFPEPADHLAVMLAYMGHLACHSEDAAQLNFLDACIDSWLAKFVVKVVECDSKHRNGFYSALASLTLAWVKQDKQLLEQTINSSVEQTLS.

This sequence belongs to the TorD/DmsD family. TorD subfamily.

The protein resides in the cytoplasm. Its function is as follows. Involved in the biogenesis of TorA. Acts on TorA before the insertion of the molybdenum cofactor and, as a result, probably favors a conformation of the apoenzyme that is competent for acquiring the cofactor. The polypeptide is Chaperone protein TorD (Shewanella oneidensis (strain ATCC 700550 / JCM 31522 / CIP 106686 / LMG 19005 / NCIMB 14063 / MR-1)).